The primary structure comprises 369 residues: RNA pseudouridine synthase 5 (369 aa).

In terms of domain architecture, S4 RNA-binding spans 47 to 104; sequence APLLGWIQRIQNGQIQIDGEVVKDPNTLLRSGSKLVYSRLPWKEPDTPYSLEVLYEDD.

It belongs to the pseudouridine synthase RluA family.

It carries out the reaction a uridine in RNA = a pseudouridine in RNA. The sequence is that of RNA pseudouridine synthase 5 from Arabidopsis thaliana (Mouse-ear cress).